The following is a 273-amino-acid chain: Bis(5'-nucleosyl)-tetraphosphatase, symmetrical (273 aa).

Belongs to the Ap4A hydrolase family.

It catalyses the reaction P(1),P(4)-bis(5'-adenosyl) tetraphosphate + H2O = 2 ADP + 2 H(+). Functionally, hydrolyzes diadenosine 5',5'''-P1,P4-tetraphosphate to yield ADP. This Aeromonas hydrophila subsp. hydrophila (strain ATCC 7966 / DSM 30187 / BCRC 13018 / CCUG 14551 / JCM 1027 / KCTC 2358 / NCIMB 9240 / NCTC 8049) protein is Bis(5'-nucleosyl)-tetraphosphatase, symmetrical.